We begin with the raw amino-acid sequence, 1529 residues long: ABC multidrug transporter AFR2 (1529 aa).

Residues 144–394 enclose the ABC transporter 1 domain; the sequence is GSLRDLIGNR…FVDMGFHCPS (251 aa). N-linked (GlcNAc...) asparagine glycans are attached at residues Asn235 and Asn318. The next 5 helical transmembrane spans lie at 510-530, 539-559, 589-609, 614-634, and 648-668; these read LFGN…LPVT, ALLF…ILIL, IPYK…MTNL, GAYF…SMLF, and LAPA…AVNV. Asn742 carries an N-linked (GlcNAc...) asparagine glycan. The helical transmembrane segment at 757–777 threads the bilayer; that stretch reads GILIGFFLFFTAIYLTATEFI. The ABC transporter 2 domain maps to 845–1087; it reads FSWKDVVYDI…ILIDYFEKNG (243 aa). Residue 881 to 888 coordinates ATP; that stretch reads GVSGAGKT. A run of 5 helical transmembrane segments spans residues 1193-1213, 1229-1249, 1268-1288, 1314-1334, and 1353-1373; these read YIWA…FSFF, VFMM…NFVT, IFIL…GVII, LMFL…IMIV, and MCLI…FWVF. Asn1434 carries an N-linked (GlcNAc...) asparagine glycan. A helical membrane pass occupies residues 1465 to 1485; the sequence is FGLLWVYVVFNVIAAIGIYWL. Residues 1493–1505 are compositionally biased toward basic and acidic residues; the sequence is GKERASEPEDVQE. The segment at 1493-1529 is disordered; that stretch reads GKERASEPEDVQEKQVPAQSTEKKYQSISRSSESTVA. A compositionally biased stretch (polar residues) spans 1518–1529; that stretch reads QSISRSSESTVA.

The protein belongs to the ABC transporter superfamily. ABCG family. PDR (TC 3.A.1.205) subfamily.

It is found in the cell membrane. It carries out the reaction itraconazole(in) + ATP + H2O = itraconazole(out) + ADP + phosphate + H(+). The enzyme catalyses voriconazole(in) + ATP + H2O = voriconazole(out) + ADP + phosphate + H(+). The catalysed reaction is fluconazole(in) + ATP + H2O = fluconazole(out) + ADP + phosphate + H(+). Functionally, pleiotropic ABC efflux transporter that confers resistance to structurally and functionally unrelated compounds including azoles such as fluconazole (FLC), itraconazole (ITC), posaconazole (POS), and voriconazole (VRC). This Cryptococcus deuterogattii (strain R265) (Cryptococcus gattii VGII (strain R265)) protein is ABC multidrug transporter AFR2.